Here is a 65-residue protein sequence, read N- to C-terminus: Stress-associated endoplasmic reticulum protein 2 (65 aa).

A helical transmembrane segment spans residues 38-58 (GPWLLALFVFVVCGSAIFQII).

This sequence belongs to the RAMP4 family. As to quaternary structure, interacts with SEC61B, SEC61A1 and the SEC61 complex. Interacts with CANX.

Its subcellular location is the membrane. The protein resides in the endoplasmic reticulum membrane. In terms of biological role, interacts with target proteins during their translocation into the lumen of the endoplasmic reticulum. Protects unfolded target proteins against degradation during ER stress. May facilitate glycosylation of target proteins after termination of ER stress. May modulate the use of N-glycosylation sites on target proteins. The chain is Stress-associated endoplasmic reticulum protein 2 (SERP2) from Bos taurus (Bovine).